The sequence spans 762 residues: 5-methyltetrahydropteroyltriglutamate--homocysteine methyltransferase (762 aa).

5-methyltetrahydropteroyltri-L-glutamate-binding positions include Arg-18–Lys-21 and Lys-112. L-homocysteine contacts are provided by residues Ile-435–Ser-437 and Glu-488. L-methionine-binding positions include Ile-435 to Ser-437 and Glu-488. 5-methyltetrahydropteroyltri-L-glutamate is bound by residues Arg-519–Cys-520 and Trp-565. Asp-603 lines the L-homocysteine pocket. Asp-603 is a binding site for L-methionine. A 5-methyltetrahydropteroyltri-L-glutamate-binding site is contributed by Glu-609. Residues His-645, Cys-647, and Glu-669 each contribute to the Zn(2+) site. The active-site Proton donor is His-698. Cys-730 contacts Zn(2+).

The protein belongs to the vitamin-B12 independent methionine synthase family. Requires Zn(2+) as cofactor.

It catalyses the reaction 5-methyltetrahydropteroyltri-L-glutamate + L-homocysteine = tetrahydropteroyltri-L-glutamate + L-methionine. The protein operates within amino-acid biosynthesis; L-methionine biosynthesis via de novo pathway; L-methionine from L-homocysteine (MetE route): step 1/1. Its function is as follows. Catalyzes the transfer of a methyl group from 5-methyltetrahydrofolate to homocysteine resulting in methionine formation. In Bacillus velezensis (strain DSM 23117 / BGSC 10A6 / LMG 26770 / FZB42) (Bacillus amyloliquefaciens subsp. plantarum), this protein is 5-methyltetrahydropteroyltriglutamate--homocysteine methyltransferase.